Consider the following 513-residue polypeptide: MLTRVKSAVANFMGGIMAGSSGSEHGGSGCGGSDLPLRFPYGRPEFLGLSQDEVECSADHIARPILILKETRRLPWATGYAEVINAGKSTHNEDQASCEVLTVKKKVGTITSTPNRNSKRRSSLPNGEGLQLKENSESEGISCHYWSLFDGHAGSGAAVVASRLLQHHITQQLQDIVEILKNSAILPPTCLGEEPESTPAHGRTLTRAASLRGGVGAPGSPSTPPTRFFTEKKIPHECLVIGALESAFKEMDLQIERERSAYNISGGCTALIVVCLLGKLYVANAGDSRAIIIRNGEIIPMSSEFTPETERQRLQYLAFMQPHLLGNEFTHLEFPRRVQRKELGKKMLYRDFNMTGWAYKTIEDDDLKFPLIYGEGKKARVMATIGVTRGLGDHDLKVHDSNIYIKPFLSSAPEVRVYDLSKYEHGADDVLILATDGLWDVLSNEEVAEAITQFLPNCDPDDPHRYTLAAQDLVMRARGVLKDRGWRISNDRLGSGDDISVYVIPLIHGNKLS.

S7 is modified (phosphoserine). Residues 77 to 506 (ATGYAEVINA…DDISVYVIPL (430 aa)) form the PPM-type phosphatase domain. The tract at residues 110–133 (ITSTPNRNSKRRSSLPNGEGLQLK) is disordered. T113 is modified (phosphothreonine). S123 and S210 each carry phosphoserine. R212 is modified (omega-N-methylarginine). Position 220 is a phosphoserine (S220). A Phosphothreonine modification is found at T223. Phosphoserine is present on S421.

Belongs to the PP2C family.

The protein resides in the nucleus. It is found in the cytoplasm. It catalyses the reaction O-phospho-L-seryl-[protein] + H2O = L-seryl-[protein] + phosphate. It carries out the reaction O-phospho-L-threonyl-[protein] + H2O = L-threonyl-[protein] + phosphate. Dephosphorylates CDKN1B at 'Thr-187', thus removing a signal for proteasomal degradation. The polypeptide is Protein phosphatase 1H (Ppm1h) (Rattus norvegicus (Rat)).